The following is a 353-amino-acid chain: uncharacterized protein (353 aa).

The interval 69–106 (ISSATPSSTPPATRASSRLQPPKGHQAGGSNSQQQQPS) is disordered. Residues 70–86 (SSATPSSTPPATRASSR) show a composition bias toward low complexity. The stretch at 319–353 (GENKEKKMREMSRVYREMTRQMDDTRRDLDRLNQG) forms a coiled coil.

This is an uncharacterized protein from Gibberella zeae (strain ATCC MYA-4620 / CBS 123657 / FGSC 9075 / NRRL 31084 / PH-1) (Wheat head blight fungus).